Consider the following 405-residue polypeptide: Patatin-like protein 2 (405 aa).

The 207-residue stretch at 24–230 (LSIDGGGVRG…AANNPTLCAM (207 aa)) folds into the PNPLA domain. Positions 28–33 (GGGVRG) match the GXGXXG motif. Residues 66-70 (GTSTG) carry the GXSXG motif. The Nucleophile role is filled by Ser68. The active-site Proton acceptor is the Asp217. Positions 217–219 (DGG) match the DGA/G motif.

It belongs to the patatin family.

In terms of biological role, possesses non-specific lipolytic acyl hydrolase (LAH) activity. Hydrolyzes phospholipids as well as galactolipids. May play a role in disease resistance. The protein is Patatin-like protein 2 (PLP2) of Oryza sativa subsp. indica (Rice).